A 228-amino-acid chain; its full sequence is Protein CWC15 homolog A (228 aa).

The interval 1-126 is disordered; it reads MTTAARPTFE…DEDSDDDTAA (126 aa). Over residues 24–34 the composition is skewed to polar residues; that stretch reads SQLSKQYSSRD. The segment covering 52-84 has biased composition (basic and acidic residues); sequence EEVRSRDFRRELEERERVVARDKNRDRPTREHT. Over residues 102–124 the composition is skewed to acidic residues; that stretch reads DADDPLTDEDGDEDSDEDSDDDT. A coiled-coil region spans residues 121–165; it reads DDDTAALLAELEKIKKERAEEKDRKELEQKAEEERIRMENILSGN.

Belongs to the CWC15 family. Identified in the spliceosome C complex. Component of the minor spliceosome, which splices U12-type introns.

Its subcellular location is the nucleus. In terms of biological role, involved in pre-mRNA splicing as component of the spliceosome. The polypeptide is Protein CWC15 homolog A (cwc15-a) (Xenopus laevis (African clawed frog)).